The chain runs to 465 residues: GTPase Der (465 aa).

EngA-type G domains follow at residues 3–167 (PLVA…PEEG) and 179–352 (IRIA…ESAN). GTP-binding positions include 9-16 (GRPNVGKS), 57-61 (DTGGI), 119-122 (NKID), 185-192 (GRPNVGKS), 232-236 (DTAGL), and 297-300 (NKWD). The KH-like domain maps to 353 to 437 (KTFTTSEVNK…PVSFIFREGT (85 aa)).

This sequence belongs to the TRAFAC class TrmE-Era-EngA-EngB-Septin-like GTPase superfamily. EngA (Der) GTPase family. As to quaternary structure, associates with the 50S ribosomal subunit.

Functionally, GTPase that plays an essential role in the late steps of ribosome biogenesis. The chain is GTPase Der from Stenotrophomonas maltophilia (strain K279a).